Reading from the N-terminus, the 352-residue chain is Probable dual-specificity RNA methyltransferase RlmN (352 aa).

Glu-99 acts as the Proton acceptor in catalysis. Residues 105 to 325 (EGDRATLCIS…ESHGYTCTIR (221 aa)) enclose the Radical SAM core domain. A disulfide bridge links Cys-112 with Cys-336. 3 residues coordinate [4Fe-4S] cluster: Cys-119, Cys-123, and Cys-126. Residues 164–165 (GE), Ser-196, 217–219 (SLH), and His-293 each bind S-adenosyl-L-methionine. Cys-336 functions as the S-methylcysteine intermediate in the catalytic mechanism.

Belongs to the radical SAM superfamily. RlmN family. The cofactor is [4Fe-4S] cluster.

It localises to the cytoplasm. It carries out the reaction adenosine(2503) in 23S rRNA + 2 reduced [2Fe-2S]-[ferredoxin] + 2 S-adenosyl-L-methionine = 2-methyladenosine(2503) in 23S rRNA + 5'-deoxyadenosine + L-methionine + 2 oxidized [2Fe-2S]-[ferredoxin] + S-adenosyl-L-homocysteine. The enzyme catalyses adenosine(37) in tRNA + 2 reduced [2Fe-2S]-[ferredoxin] + 2 S-adenosyl-L-methionine = 2-methyladenosine(37) in tRNA + 5'-deoxyadenosine + L-methionine + 2 oxidized [2Fe-2S]-[ferredoxin] + S-adenosyl-L-homocysteine. In terms of biological role, specifically methylates position 2 of adenine 2503 in 23S rRNA and position 2 of adenine 37 in tRNAs. In Porphyromonas gingivalis (strain ATCC 33277 / DSM 20709 / CIP 103683 / JCM 12257 / NCTC 11834 / 2561), this protein is Probable dual-specificity RNA methyltransferase RlmN.